A 147-amino-acid chain; its full sequence is Hemoglobin subunit beta (147 aa).

Residues 3–147 enclose the Globin domain; it reads HWTAEEKQLI…VAHALARKYH (145 aa). Heme b is bound by residues His-64 and His-93.

This sequence belongs to the globin family. In terms of assembly, heterotetramer of two alpha chains and two beta chains. As to expression, red blood cells.

Involved in oxygen transport from the lung to the various peripheral tissues. The sequence is that of Hemoglobin subunit beta (HBB) from Cairina moschata (Muscovy duck).